Reading from the N-terminus, the 65-residue chain is Metallothionein-like protein 3B (65 aa).

This sequence belongs to the metallothionein superfamily. Type 15 family. In terms of tissue distribution, expressed in leaves and rachis.

In terms of biological role, metallothioneins have a high content of cysteine residues that bind various heavy metals. The protein is Metallothionein-like protein 3B (MT3B) of Oryza sativa subsp. japonica (Rice).